We begin with the raw amino-acid sequence, 428 residues long: Glutamate-1-semialdehyde 2,1-aminomutase 2 (428 aa).

Lys267 is subject to N6-(pyridoxal phosphate)lysine.

Belongs to the class-III pyridoxal-phosphate-dependent aminotransferase family. HemL subfamily. As to quaternary structure, homodimer. Pyridoxal 5'-phosphate is required as a cofactor.

The protein resides in the cytoplasm. The enzyme catalyses (S)-4-amino-5-oxopentanoate = 5-aminolevulinate. The protein operates within porphyrin-containing compound metabolism; protoporphyrin-IX biosynthesis; 5-aminolevulinate from L-glutamyl-tRNA(Glu): step 2/2. This chain is Glutamate-1-semialdehyde 2,1-aminomutase 2, found in Oceanobacillus iheyensis (strain DSM 14371 / CIP 107618 / JCM 11309 / KCTC 3954 / HTE831).